A 491-amino-acid polypeptide reads, in one-letter code: Acetyl-coenzyme A carboxylase carboxyl transferase subunit beta, chloroplastic (491 aa).

Residues 26-49 form a disordered region; sequence ARPRPIGNTNGSQDPSINDRDKNG. A compositionally biased stretch (polar residues) spans 32–41; the sequence is GNTNGSQDPS. The region spanning 222–491 is the CoA carboxyltransferase N-terminal domain; the sequence is LWVQCDNCYG…PLNHNSQVKR (270 aa). The Zn(2+) site is built by Cys-226, Cys-229, Cys-245, and Cys-248. The C4-type zinc finger occupies 226 to 248; sequence CDNCYGLNYKKIFSSKMNICEQC.

Belongs to the AccD/PCCB family. As to quaternary structure, acetyl-CoA carboxylase is a heterohexamer composed of biotin carboxyl carrier protein, biotin carboxylase and 2 subunits each of ACCase subunit alpha and ACCase plastid-coded subunit beta (accD). Zn(2+) is required as a cofactor.

The protein localises to the plastid. It localises to the chloroplast stroma. The catalysed reaction is N(6)-carboxybiotinyl-L-lysyl-[protein] + acetyl-CoA = N(6)-biotinyl-L-lysyl-[protein] + malonyl-CoA. The protein operates within lipid metabolism; malonyl-CoA biosynthesis; malonyl-CoA from acetyl-CoA: step 1/1. Component of the acetyl coenzyme A carboxylase (ACC) complex. Biotin carboxylase (BC) catalyzes the carboxylation of biotin on its carrier protein (BCCP) and then the CO(2) group is transferred by the transcarboxylase to acetyl-CoA to form malonyl-CoA. This chain is Acetyl-coenzyme A carboxylase carboxyl transferase subunit beta, chloroplastic, found in Ceratophyllum demersum (Rigid hornwort).